A 222-amino-acid chain; its full sequence is Small ribosomal subunit protein uS7m (222 aa).

Belongs to the universal ribosomal protein uS7 family. As to quaternary structure, part of the small ribosomal subunit.

The protein resides in the mitochondrion. Functionally, one of the primary rRNA binding proteins, it binds directly to 18S rRNA where it nucleates assembly of the head domain of the small subunit. The polypeptide is Small ribosomal subunit protein uS7m (RPS7) (Prototheca wickerhamii).